Reading from the N-terminus, the 200-residue chain is Dephospho-CoA kinase (200 aa).

The region spanning 6–200 (AIALSGGIAT…KIKAKYLEKK (195 aa)) is the DPCK domain. 14-19 (ATGKST) provides a ligand contact to ATP.

It belongs to the CoaE family.

It localises to the cytoplasm. It catalyses the reaction 3'-dephospho-CoA + ATP = ADP + CoA + H(+). It participates in cofactor biosynthesis; coenzyme A biosynthesis; CoA from (R)-pantothenate: step 5/5. Its function is as follows. Catalyzes the phosphorylation of the 3'-hydroxyl group of dephosphocoenzyme A to form coenzyme A. This chain is Dephospho-CoA kinase, found in Sulfurimonas denitrificans (strain ATCC 33889 / DSM 1251) (Thiomicrospira denitrificans (strain ATCC 33889 / DSM 1251)).